A 224-amino-acid chain; its full sequence is Imidazole glycerol phosphate synthase subunit HisH (224 aa).

The Glutamine amidotransferase type-1 domain maps to 5 to 214 (DTIIIDTGCA…MKMNAGSFAG (210 aa)). Residue Cys-80 is the Nucleophile of the active site. Residues His-189 and Glu-191 contribute to the active site.

In terms of assembly, heterodimer of HisH and HisF.

Its subcellular location is the cytoplasm. It catalyses the reaction 5-[(5-phospho-1-deoxy-D-ribulos-1-ylimino)methylamino]-1-(5-phospho-beta-D-ribosyl)imidazole-4-carboxamide + L-glutamine = D-erythro-1-(imidazol-4-yl)glycerol 3-phosphate + 5-amino-1-(5-phospho-beta-D-ribosyl)imidazole-4-carboxamide + L-glutamate + H(+). The enzyme catalyses L-glutamine + H2O = L-glutamate + NH4(+). Its pathway is amino-acid biosynthesis; L-histidine biosynthesis; L-histidine from 5-phospho-alpha-D-ribose 1-diphosphate: step 5/9. IGPS catalyzes the conversion of PRFAR and glutamine to IGP, AICAR and glutamate. The HisH subunit catalyzes the hydrolysis of glutamine to glutamate and ammonia as part of the synthesis of IGP and AICAR. The resulting ammonia molecule is channeled to the active site of HisF. The polypeptide is Imidazole glycerol phosphate synthase subunit HisH (Shewanella loihica (strain ATCC BAA-1088 / PV-4)).